A 257-amino-acid polypeptide reads, in one-letter code: UPF0246 protein BF3795 (257 aa).

The protein belongs to the UPF0246 family.

The sequence is that of UPF0246 protein BF3795 from Bacteroides fragilis (strain ATCC 25285 / DSM 2151 / CCUG 4856 / JCM 11019 / LMG 10263 / NCTC 9343 / Onslow / VPI 2553 / EN-2).